The following is a 304-amino-acid chain: N-acetylmuramic acid 6-phosphate etherase (304 aa).

The region spanning Ile-62–Lys-225 is the SIS domain. The Proton donor role is filled by Glu-90. Glu-121 is a catalytic residue.

This sequence belongs to the GCKR-like family. MurNAc-6-P etherase subfamily. Homodimer.

It carries out the reaction N-acetyl-D-muramate 6-phosphate + H2O = N-acetyl-D-glucosamine 6-phosphate + (R)-lactate. It participates in amino-sugar metabolism; 1,6-anhydro-N-acetylmuramate degradation. It functions in the pathway amino-sugar metabolism; N-acetylmuramate degradation. The protein operates within cell wall biogenesis; peptidoglycan recycling. Its function is as follows. Specifically catalyzes the cleavage of the D-lactyl ether substituent of MurNAc 6-phosphate, producing GlcNAc 6-phosphate and D-lactate. Together with AnmK, is also required for the utilization of anhydro-N-acetylmuramic acid (anhMurNAc) either imported from the medium or derived from its own cell wall murein, and thus plays a role in cell wall recycling. The sequence is that of N-acetylmuramic acid 6-phosphate etherase from Glaesserella parasuis serovar 5 (strain SH0165) (Haemophilus parasuis).